We begin with the raw amino-acid sequence, 312 residues long: Magnesium protoporphyrin IX methyltransferase, chloroplastic (312 aa).

The N-terminal 39 residues, 1–39 (MPFAPSLLSSSSSVSQFLPRFPNATRFNVTPRSRAATVV), are a transit peptide targeting the chloroplast.

This sequence belongs to the class I-like SAM-binding methyltransferase superfamily. Magnesium protoporphyrin O-methyltransferase family.

It is found in the plastid. The protein resides in the chloroplast membrane. The protein localises to the chloroplast thylakoid membrane. It catalyses the reaction Mg-protoporphyrin IX + S-adenosyl-L-methionine = Mg-protoporphyrin IX 13-monomethyl ester + S-adenosyl-L-homocysteine. The protein operates within porphyrin-containing compound metabolism; chlorophyll biosynthesis. Its activity is regulated as follows. Regulated by the folate status via an increased concentration of S-adenosyl-homocysteine (AdoHcy), a potent inhibitor of most AdoMet-dependent methyltransferases. Its function is as follows. Converts Mg-protoporphyrin IX to Mg-protoporphyrin IX methylester using S-adenosyl-L-methionine as a cofactor. Involved in chloroplast-to-nucleus signaling by acting as a negative effector of nuclear photosynthetic gene expression. The polypeptide is Magnesium protoporphyrin IX methyltransferase, chloroplastic (CHLM) (Arabidopsis thaliana (Mouse-ear cress)).